The following is a 72-amino-acid chain: Translation initiation factor IF-1 (72 aa).

Residues 1 to 72 (MAKDDVIEVE…TRGRIVWRGK (72 aa)) form the S1-like domain.

The protein belongs to the IF-1 family. Component of the 30S ribosomal translation pre-initiation complex which assembles on the 30S ribosome in the order IF-2 and IF-3, IF-1 and N-formylmethionyl-tRNA(fMet); mRNA recruitment can occur at any time during PIC assembly.

It localises to the cytoplasm. In terms of biological role, one of the essential components for the initiation of protein synthesis. Stabilizes the binding of IF-2 and IF-3 on the 30S subunit to which N-formylmethionyl-tRNA(fMet) subsequently binds. Helps modulate mRNA selection, yielding the 30S pre-initiation complex (PIC). Upon addition of the 50S ribosomal subunit IF-1, IF-2 and IF-3 are released leaving the mature 70S translation initiation complex. The sequence is that of Translation initiation factor IF-1 from Caldanaerobacter subterraneus subsp. tengcongensis (strain DSM 15242 / JCM 11007 / NBRC 100824 / MB4) (Thermoanaerobacter tengcongensis).